An 873-amino-acid polypeptide reads, in one-letter code: Alanine--tRNA ligase (873 aa).

Residues histidine 562, histidine 566, cysteine 663, and histidine 667 each contribute to the Zn(2+) site.

The protein belongs to the class-II aminoacyl-tRNA synthetase family. Zn(2+) is required as a cofactor.

Its subcellular location is the cytoplasm. It catalyses the reaction tRNA(Ala) + L-alanine + ATP = L-alanyl-tRNA(Ala) + AMP + diphosphate. In terms of biological role, catalyzes the attachment of alanine to tRNA(Ala) in a two-step reaction: alanine is first activated by ATP to form Ala-AMP and then transferred to the acceptor end of tRNA(Ala). Also edits incorrectly charged Ser-tRNA(Ala) and Gly-tRNA(Ala) via its editing domain. The sequence is that of Alanine--tRNA ligase from Bordetella avium (strain 197N).